Reading from the N-terminus, the 357-residue chain is Dynein axonemal assembly factor 10 (357 aa).

6 WD repeats span residues 63–105 (EKAK…MPVY), 115–154 (NAID…DPVA), 162–205 (ENKR…LRWE), 207–249 (NIKN…PTKG), 257–297 (AHKS…QRSK), and 319–357 (LSTQ…LNKI).

Component of the PAQosome complex which is responsible for the biogenesis of several protein complexes and which consists of R2TP complex members RUVBL1, RUVBL2, RPAP3 and PIH1D1, URI complex members PFDN2, PFDN6, PDRG1, UXT and URI1 as well as ASDURF, POLR2E and DNAAF10/WDR92. Interacts with PIH1D1; the interaction associates DNAAF10 with the R2TP complex. Interacts with several dynein axonemal assembly factors. As to expression, widely expressed with the highest expression in testis.

It localises to the dynein axonemal particle. Functionally, key assembly factor specifically required for the stability of axonemal dynein heavy chains in cytoplasm. This chain is Dynein axonemal assembly factor 10, found in Homo sapiens (Human).